The chain runs to 591 residues: PDZ and LIM domain protein 5 (591 aa).

Residue Ser2 is modified to N-acetylserine. Ser2 carries the phosphoserine modification. The PDZ domain occupies Ser2–Ser85. Lys89 bears the N6-acetyllysine; alternate mark. Lys89 is subject to N6-succinyllysine; alternate. A Glycyl lysine isopeptide (Lys-Gly) (interchain with G-Cter in SUMO2); alternate cross-link involves residue Lys89. Phosphoserine occurs at positions 102, 105, 111, 134, and 137. Disordered regions lie at residues Thr121–Val166 and Ser186–Thr398. The segment covering Ser134–Ile143 has biased composition (polar residues). Positions Pro144–Val166 are enriched in low complexity. Polar residues-rich tracts occupy residues Ser186–Asn195 and Arg205–Ala217. A phosphoserine mark is found at Gln218, Ser228, and Ser260. Basic and acidic residues-rich tracts occupy residues Asp258–Pro273 and His294–Lys304. Over residues Gln310–Ser339 the composition is skewed to low complexity. 3 positions are modified to phosphoserine: Ser313, Pro316, and Ser322. Position 350 is an N6-acetyllysine (Lys350). Over residues Gly353–Gly385 the composition is skewed to polar residues. Phosphoserine is present on residues Ser359 and Ser361. LIM zinc-binding domains follow at residues Pro413 to Pro472, Pro472 to Thr531, and Thr531 to Phe591.

As to quaternary structure, interacts with various PKC isoforms through the LIM domains. Interacts with actin and alpha-actinin through the PDZ domain. Interacts (via LIM domains) with SIPA1L1/SPAR; this interaction may occur preferentially with isoform 1.

Its subcellular location is the postsynaptic density. It is found in the presynapse. It localises to the postsynapse. The protein localises to the cytoplasm. The protein resides in the cytosol. In terms of biological role, may play an important role in the heart development by scaffolding PKC to the Z-disk region. May play a role in the regulation of cardiomyocyte expansion. Isoforms lacking the LIM domains may negatively modulate the scaffolding activity of isoform 1. Overexpression promotes the development of heart hypertrophy. Contributes to the regulation of dendritic spine morphogenesis in neurons. May be required to restrain postsynaptic growth of excitatory synapses. Isoform 1, but not isoform 2, expression favors spine thinning and elongation. The chain is PDZ and LIM domain protein 5 from Mus musculus (Mouse).